The following is a 242-amino-acid chain: Protein ABHD14A (242 aa).

The chain crosses the membrane as a helical; Signal-anchor for type II membrane protein span at residues 6 to 26 (AALLGLGLLLMFLLYMGLPGP). An N-linked (GlcNAc...) asparagine glycan is attached at Asn38. Catalysis depends on charge relay system residues Ser142, Asp193, and His220.

This sequence belongs to the AB hydrolase superfamily. ABHD14 family.

The protein localises to the cytoplasm. The protein resides in the membrane. In terms of biological role, possible role in granule neuron development. The sequence is that of Protein ABHD14A from Rattus norvegicus (Rat).